Reading from the N-terminus, the 1482-residue chain is Pregnancy zone protein (1482 aa).

A signal peptide spans 1–25; it reads MRKDRLLHLCLVLLLILLSASDSNS. 5 N-linked (GlcNAc...) asparagine glycosylation sites follow: Asn54, Asn69, Asn246, Asn392, and Asn406. The bait region stretch occupies residues 685 to 735; it reads CSVIPSVSAGAVGQGYYGAGLGVVERPYVPQLGTYNVIPLNNEQSSGPVPE. Residues Asn753, Asn875, and Asn932 are each glycosylated (N-linked (GlcNAc...) asparagine). A cross-link (isoglutamyl cysteine thioester (Cys-Gln)) is located at residues 978–981; the sequence is CGEQ. N-linked (GlcNAc...) asparagine glycosylation is found at Asn997 and Asn1430.

This sequence belongs to the protease inhibitor I39 (alpha-2-macroglobulin) family. In terms of assembly, homotetramer, which consists of two pairs of disulfide-linked chains. In terms of tissue distribution, plasma. Prominent constituent of late-pregnancy sera.

The protein resides in the secreted. In terms of biological role, is able to inhibit all four classes of proteinases by a unique 'trapping' mechanism. This protein has a peptide stretch, called the 'bait region' which contains specific cleavage sites for different proteinases. When a proteinase cleaves the bait region, a conformational change is induced in the protein which traps the proteinase. The entrapped enzyme remains active against low molecular weight substrates (activity against high molecular weight substrates is greatly reduced). Following cleavage in the bait region a thioester bond is hydrolyzed and mediates the covalent binding of the protein to the proteinase. This chain is Pregnancy zone protein (PZP), found in Homo sapiens (Human).